The primary structure comprises 774 residues: Polyribonucleotide nucleotidyltransferase (774 aa).

The Mg(2+) site is built by Asp-485 and Asp-491. The 60-residue stretch at 552 to 611 (PRIETMSVPKDKIRDIIGTGGKIIREIVATTGAKVDIDDDGTVKISSSDTAQIEAARNWI) folds into the KH domain. Positions 621 to 689 (GKIYTGKVVN…NRGKVRLSMR (69 aa)) constitute an S1 motif domain. The interval 689-774 (RVVDQETGEE…APAFLTRDDD (86 aa)) is disordered. A compositionally biased stretch (basic and acidic residues) spans 700-755 (PDTRPPREERPRGDRGDRGDRGPRRDGDRRREGGDRGPRRDRGDRGDRPRRERSEG).

Belongs to the polyribonucleotide nucleotidyltransferase family. Mg(2+) serves as cofactor.

The protein localises to the cytoplasm. The enzyme catalyses RNA(n+1) + phosphate = RNA(n) + a ribonucleoside 5'-diphosphate. Its function is as follows. Involved in mRNA degradation. Catalyzes the phosphorolysis of single-stranded polyribonucleotides processively in the 3'- to 5'-direction. This Rhizorhabdus wittichii (strain DSM 6014 / CCUG 31198 / JCM 15750 / NBRC 105917 / EY 4224 / RW1) (Sphingomonas wittichii) protein is Polyribonucleotide nucleotidyltransferase.